Consider the following 231-residue polypeptide: 7-cyano-7-deazaguanine synthase (231 aa).

Phe-8–Leu-18 serves as a coordination point for ATP. Cys-188, Cys-197, Cys-200, and Cys-203 together coordinate Zn(2+).

It belongs to the QueC family. Requires Zn(2+) as cofactor.

It carries out the reaction 7-carboxy-7-deazaguanine + NH4(+) + ATP = 7-cyano-7-deazaguanine + ADP + phosphate + H2O + H(+). The protein operates within purine metabolism; 7-cyano-7-deazaguanine biosynthesis. Catalyzes the ATP-dependent conversion of 7-carboxy-7-deazaguanine (CDG) to 7-cyano-7-deazaguanine (preQ(0)). This is 7-cyano-7-deazaguanine synthase from Salmonella paratyphi B (strain ATCC BAA-1250 / SPB7).